The sequence spans 92 residues: Putative phosphotransferase enzyme IIB component SgcB (92 aa).

The PTS EIIB type-2 domain occupies 1 to 92; sequence MKKILVACGT…KQQIKALLTQ (92 aa). Cys8 serves as the catalytic Phosphocysteine intermediate.

The protein resides in the cytoplasm. The phosphoenolpyruvate-dependent sugar phosphotransferase system (sugar PTS), a major carbohydrate active -transport system, catalyzes the phosphorylation of incoming sugar substrates concomitantly with their translocation across the cell membrane. This is Putative phosphotransferase enzyme IIB component SgcB (sgcB) from Escherichia coli (strain K12).